A 562-amino-acid chain; its full sequence is MFS-type transporter calB (562 aa).

A compositionally biased stretch (polar residues) spans 1-16 (MDEVTRTAQRSPSITE). Residues 1–45 (MDEVTRTAQRSPSITETHAGETKLAGPGEKEGDVESPVDPSADSE) are disordered. The chain crosses the membrane as a helical span at residues 57–77 (FAILASVTLSAFLMLLDGSII). Asn-83 is a glycosylation site (N-linked (GlcNAc...) asparagine). 13 helical membrane passes run 94–113 (IGWYTAAYQLASAALQPLSG), 123–143 (WTYLFFFGLFELGSLICGVAN), 154–174 (VAGLGSSGLLNGGMTIIAGAV), 184–204 (GIYLGISQLGIVCGPLIGGAL), 213–233 (CFYINLPVGAVTAILLLFLQV), 256–276 (LIGFTLFAPAAIMVLLALYYG), 284–304 (SSQVIGLFCGAGVTIIVFALW), 329–349 (INGAALVASILVAAQYLPIYF), 362–382 (VNTLPGILSQLLTVILSGVLV), 389–409 (LPFAAAGSAISAVGNGIVTLF), 418–438 (WIGYQIVLGSGRGIGMQMGII), 451–471 (VGIAFMIFCQNFAGAIFVVVG), and 530–550 (VFYLLMSLSLAGFVAAFGMGW). N-linked (GlcNAc...) asparagine glycosylation occurs at Asn-557.

Belongs to the major facilitator superfamily. TCR/Tet family.

It is found in the cell membrane. Functionally, MFS-type transporter; part of the gene cluster that mediates the biosynthesis of calbistrin A and related compounds. Calbistrin A is a secondary metabolite with an interesting structure that was recently found to have bioactivity against leukemia cells. It consists of two polyketides linked by an ester bond: a bicyclic decalin containing polyketide and a linear 12 carbon dioic acid structure. Required for the secretion of calbistrin A and calbistrin C, as well as of related compounds decumbenone A, B and C. This chain is MFS-type transporter calB, found in Penicillium decumbens.